Here is a 168-residue protein sequence, read N- to C-terminus: Crossover junction endodeoxyribonuclease RuvC (168 aa).

Catalysis depends on residues D9, E70, and D145. Residues D9, E70, and D145 each contribute to the Mg(2+) site.

This sequence belongs to the RuvC family. Homodimer which binds Holliday junction (HJ) DNA. The HJ becomes 2-fold symmetrical on binding to RuvC with unstacked arms; it has a different conformation from HJ DNA in complex with RuvA. In the full resolvosome a probable DNA-RuvA(4)-RuvB(12)-RuvC(2) complex forms which resolves the HJ. It depends on Mg(2+) as a cofactor.

Its subcellular location is the cytoplasm. The enzyme catalyses Endonucleolytic cleavage at a junction such as a reciprocal single-stranded crossover between two homologous DNA duplexes (Holliday junction).. The RuvA-RuvB-RuvC complex processes Holliday junction (HJ) DNA during genetic recombination and DNA repair. Endonuclease that resolves HJ intermediates. Cleaves cruciform DNA by making single-stranded nicks across the HJ at symmetrical positions within the homologous arms, yielding a 5'-phosphate and a 3'-hydroxyl group; requires a central core of homology in the junction. The consensus cleavage sequence is 5'-(A/T)TT(C/G)-3'. Cleavage occurs on the 3'-side of the TT dinucleotide at the point of strand exchange. HJ branch migration catalyzed by RuvA-RuvB allows RuvC to scan DNA until it finds its consensus sequence, where it cleaves and resolves the cruciform DNA. The protein is Crossover junction endodeoxyribonuclease RuvC of Chlamydia felis (strain Fe/C-56) (Chlamydophila felis).